The primary structure comprises 116 residues: Cocaine- and amphetamine-regulated transcript protein (116 aa).

The N-terminal stretch at Met1–Ala27 is a signal peptide. At Tyr41 the chain carries Phosphotyrosine. At Ser48 the chain carries Phosphoserine. 3 disulfides stabilise this stretch: Cys82–Cys100, Cys88–Cys108, and Cys102–Cys115.

It belongs to the CART family. In terms of tissue distribution, hypothalamus. Found in neurons of the ventrolateral part of the arcuate nucleus, in the external zone of the median eminence, and also found in terminals in the periventricular part of the paraventricular nucleus.

The protein localises to the secreted. Its function is as follows. Satiety factor closely associated with the actions of leptin and neuropeptide Y; this anorectic peptide inhibits both normal and starvation-induced feeding and completely blocks the feeding response induced by neuropeptide Y and regulated by leptin in the hypothalamus. It promotes neuronal development and survival in vitro. This is Cocaine- and amphetamine-regulated transcript protein (CARTPT) from Homo sapiens (Human).